A 159-amino-acid chain; its full sequence is Cytochrome P450 monooxygenase aunB (159 aa).

C134 is a heme binding site.

The protein belongs to the cytochrome P450 family. The cofactor is heme.

It carries out the reaction 2 fonsecin B + NADPH + O2 + H(+) = aurasperone B + NADP(+) + 2 H2O. It catalyses the reaction 2 rubrofusarin B + NADPH + O2 + H(+) = aurasperone A + NADP(+) + 2 H2O. It participates in secondary metabolite biosynthesis. Its function is as follows. Cytochrome P450 monooxygenase; part of the gene cluster that mediates the biosynthesis of aurasperone B, a dimeric gamma-naphthopyrone. The first step in the biosynthesis of aurasperone B is the production of gamma-naphthopyrone precursor YWA1 by the non-reducing polyketide synthase albA, via condensation of one acetyl-CoA starter unit with 6 malonyl-CoA units. YWA1 is then methylated by aunE at position C-6 to yield foncesin which is further methylated at position C-8 by aunD to produce fonsecin B. A key enzyme in the biosynthetic pathway is the cytochrome P450 monooxygenase aunB which catalyzes the oxidative dimerization of fonsecin B to aurasperone B. AunB also catalyzes the oxidative dimerization of rubrofusarin B into aurasperone A. The chain is Cytochrome P450 monooxygenase aunB from Aspergillus niger (strain ATCC 1015 / CBS 113.46 / FGSC A1144 / LSHB Ac4 / NCTC 3858a / NRRL 328 / USDA 3528.7).